Here is a 138-residue protein sequence, read N- to C-terminus: Beta-galactosidase (138 aa).

The protein belongs to the glycosyl hydrolase 2 family.

It carries out the reaction Hydrolysis of terminal non-reducing beta-D-galactose residues in beta-D-galactosides.. The chain is Beta-galactosidase (lacZ) from Rhizobium radiobacter (Agrobacterium tumefaciens).